The chain runs to 437 residues: AA9 family lytic polysaccharide monooxygenase H (437 aa).

The first 21 residues, 1 to 21, serve as a signal peptide directing secretion; that stretch reads MNLSLFTLALVACYSSQLAAA. Residue His22 coordinates Cu(2+). Cys64 and Cys193 form a disulfide bridge. N-linked (GlcNAc...) asparagine glycosylation is found at Asn67 and Asn79. Cu(2+) is bound at residue His104. 2 N-linked (GlcNAc...) asparagine glycosylation sites follow: Asn120 and Asn138. Residues His178 and Gln188 each coordinate O2. Cu(2+) is bound at residue Tyr190. N-linked (GlcNAc...) asparagine glycosylation is found at Asn252 and Asn307. The region spanning 392–437 is the Chitin-binding type-1 domain; that stretch reads DGKCGDGNGQTCKGSLLGECCSQVGYCGSSESYCGVGCQGNFGVCG. 4 cysteine pairs are disulfide-bonded: Cys395–Cys412, Cys403–Cys418, Cys411–Cys425, and Cys429–Cys436.

Belongs to the polysaccharide monooxygenase AA9 family. Cu(2+) serves as cofactor.

It is found in the secreted. The enzyme catalyses [(1-&gt;4)-beta-D-glucosyl]n+m + reduced acceptor + O2 = 4-dehydro-beta-D-glucosyl-[(1-&gt;4)-beta-D-glucosyl]n-1 + [(1-&gt;4)-beta-D-glucosyl]m + acceptor + H2O.. Its function is as follows. Lytic polysaccharide monooxygenase (LPMO) that depolymerizes crystalline and amorphous polysaccharides via the oxidation of scissile alpha- or beta-(1-4)-glycosidic bonds, yielding C1 and C4 oxidation products. Catalysis by LPMOs requires the reduction of the active-site copper from Cu(II) to Cu(I) by a reducing agent and H(2)O(2) or O(2) as a cosubstrate. This chain is AA9 family lytic polysaccharide monooxygenase H, found in Botryotinia fuckeliana (strain B05.10) (Noble rot fungus).